The following is a 127-amino-acid chain: Ribonuclease P protein component (127 aa).

Belongs to the RnpA family. Consists of a catalytic RNA component (M1 or rnpB) and a protein subunit.

It carries out the reaction Endonucleolytic cleavage of RNA, removing 5'-extranucleotides from tRNA precursor.. Its function is as follows. RNaseP catalyzes the removal of the 5'-leader sequence from pre-tRNA to produce the mature 5'-terminus. It can also cleave other RNA substrates such as 4.5S RNA. The protein component plays an auxiliary but essential role in vivo by binding to the 5'-leader sequence and broadening the substrate specificity of the ribozyme. The polypeptide is Ribonuclease P protein component (Synechococcus sp. (strain RCC307)).